Consider the following 330-residue polypeptide: Methionyl-tRNA formyltransferase (330 aa).

121–124 (SLLP) is a binding site for (6S)-5,6,7,8-tetrahydrofolate.

This sequence belongs to the Fmt family.

It catalyses the reaction L-methionyl-tRNA(fMet) + (6R)-10-formyltetrahydrofolate = N-formyl-L-methionyl-tRNA(fMet) + (6S)-5,6,7,8-tetrahydrofolate + H(+). In terms of biological role, attaches a formyl group to the free amino group of methionyl-tRNA(fMet). The formyl group appears to play a dual role in the initiator identity of N-formylmethionyl-tRNA by promoting its recognition by IF2 and preventing the misappropriation of this tRNA by the elongation apparatus. The chain is Methionyl-tRNA formyltransferase from Burkholderia cenocepacia (strain ATCC BAA-245 / DSM 16553 / LMG 16656 / NCTC 13227 / J2315 / CF5610) (Burkholderia cepacia (strain J2315)).